The following is a 270-amino-acid chain: GHMVNAIYQIDEFANLGANSIETDVSFDDNANPEYTYHGIPCDCGRSCLKWENYNDFLKGLRSATTPGNSKYQSKLILVVFDLKTGSLYDNQASEAGKKLAKNLLKHYWNNGNNGGRAYIVLSIPDLNHYPLIKGFTDTLKQEGHPELLEKVGYDFSGNDAVGDVAKAYKKAGVSGHVWQSDGITNCLLRGLTRVKEAVANRDSGNGYINKVYYWTVDKRATTRDALDAGVDGVMTNYPDVIADVMNEAAYKNKVRLATYEDSPWVTFKK.

The active site involves His-2. Mg(2+)-binding residues include Glu-22 and Asp-24. His-38 serves as the catalytic Nucleophile. 2 disulfide bridges follow: Cys-42-Cys-48 and Cys-44-Cys-187. Asp-82 contributes to the Mg(2+) binding site.

This sequence belongs to the arthropod phospholipase D family. Class II subfamily. It depends on Mg(2+) as a cofactor. As to expression, expressed by the venom gland.

The protein localises to the secreted. It carries out the reaction an N-(acyl)-sphingosylphosphocholine = an N-(acyl)-sphingosyl-1,3-cyclic phosphate + choline. The enzyme catalyses an N-(acyl)-sphingosylphosphoethanolamine = an N-(acyl)-sphingosyl-1,3-cyclic phosphate + ethanolamine. The catalysed reaction is a 1-acyl-sn-glycero-3-phosphocholine = a 1-acyl-sn-glycero-2,3-cyclic phosphate + choline. It catalyses the reaction a 1-acyl-sn-glycero-3-phosphoethanolamine = a 1-acyl-sn-glycero-2,3-cyclic phosphate + ethanolamine. Its function is as follows. Dermonecrotic toxins cleave the phosphodiester linkage between the phosphate and headgroup of certain phospholipids (sphingolipid and lysolipid substrates), forming an alcohol (often choline) and a cyclic phosphate. This toxin acts on sphingomyelin (SM). It may also act on ceramide phosphoethanolamine (CPE), lysophosphatidylcholine (LPC) and lysophosphatidylethanolamine (LPE), but not on lysophosphatidylserine (LPS), and lysophosphatidylglycerol (LPG). It acts by transphosphatidylation, releasing exclusively cyclic phosphate products as second products. Induces dermonecrosis, hemolysis, increased vascular permeability, edema, inflammatory response, and platelet aggregation. This is Dermonecrotic toxin LhSicTox-alphaIA2aiii from Loxosceles hirsuta (Recluse spider).